The sequence spans 375 residues: UDP-N-acetylglucosamine--N-acetylmuramyl-(pentapeptide) pyrophosphoryl-undecaprenol N-acetylglucosamine transferase (375 aa).

UDP-N-acetyl-alpha-D-glucosamine is bound by residues 13-15, asparagine 124, arginine 165, serine 193, and glutamine 294; that span reads TGG.

This sequence belongs to the glycosyltransferase 28 family. MurG subfamily.

It is found in the cell inner membrane. The catalysed reaction is di-trans,octa-cis-undecaprenyl diphospho-N-acetyl-alpha-D-muramoyl-L-alanyl-D-glutamyl-meso-2,6-diaminopimeloyl-D-alanyl-D-alanine + UDP-N-acetyl-alpha-D-glucosamine = di-trans,octa-cis-undecaprenyl diphospho-[N-acetyl-alpha-D-glucosaminyl-(1-&gt;4)]-N-acetyl-alpha-D-muramoyl-L-alanyl-D-glutamyl-meso-2,6-diaminopimeloyl-D-alanyl-D-alanine + UDP + H(+). The protein operates within cell wall biogenesis; peptidoglycan biosynthesis. Functionally, cell wall formation. Catalyzes the transfer of a GlcNAc subunit on undecaprenyl-pyrophosphoryl-MurNAc-pentapeptide (lipid intermediate I) to form undecaprenyl-pyrophosphoryl-MurNAc-(pentapeptide)GlcNAc (lipid intermediate II). The polypeptide is UDP-N-acetylglucosamine--N-acetylmuramyl-(pentapeptide) pyrophosphoryl-undecaprenol N-acetylglucosamine transferase (Chelativorans sp. (strain BNC1)).